The sequence spans 189 residues: Molybdopterin synthase catalytic subunit (189 aa).

The span at 1 to 30 (MSSLEISNSCFSPETRSPSSRQSVEDNASE) shows a compositional bias: polar residues. Residues 1–41 (MSSLEISNSCFSPETRSPSSRQSVEDNASEPSGKDVDDVQE) are disordered. S20 bears the Phosphoserine mark. The span at 32–41 (SGKDVDDVQE) shows a compositional bias: basic and acidic residues. Substrate-binding positions include 143–144 (HR), K159, and 166–168 (KKE).

It belongs to the MoaE family. MOCS2B subfamily. In terms of assembly, heterotetramer; composed of 2 small (MOCS2A) and 2 large (MOCS2B) subunits.

It is found in the cytoplasm. It localises to the cytosol. It carries out the reaction 2 [molybdopterin-synthase sulfur-carrier protein]-C-terminal-Gly-aminoethanethioate + cyclic pyranopterin phosphate + H2O = molybdopterin + 2 [molybdopterin-synthase sulfur-carrier protein]-C-terminal Gly-Gly + 2 H(+). The protein operates within cofactor biosynthesis; molybdopterin biosynthesis. Functionally, catalytic subunit of the molybdopterin synthase complex, a complex that catalyzes the conversion of precursor Z into molybdopterin. Acts by mediating the incorporation of 2 sulfur atoms from thiocarboxylated MOCS2A into precursor Z to generate a dithiolene group. This chain is Molybdopterin synthase catalytic subunit, found in Mus musculus (Mouse).